The following is a 571-amino-acid chain: Sulfite reductase [NADPH] hemoprotein beta-component (571 aa).

[4Fe-4S] cluster contacts are provided by Cys436, Cys442, Cys481, and Cys485. Siroheme is bound at residue Cys485.

Belongs to the nitrite and sulfite reductase 4Fe-4S domain family. In terms of assembly, alpha(8)-beta(8). The alpha component is a flavoprotein, the beta component is a hemoprotein. The cofactor is siroheme. It depends on [4Fe-4S] cluster as a cofactor.

The enzyme catalyses hydrogen sulfide + 3 NADP(+) + 3 H2O = sulfite + 3 NADPH + 4 H(+). Its pathway is sulfur metabolism; hydrogen sulfide biosynthesis; hydrogen sulfide from sulfite (NADPH route): step 1/1. Its function is as follows. Component of the sulfite reductase complex that catalyzes the 6-electron reduction of sulfite to sulfide. This is one of several activities required for the biosynthesis of L-cysteine from sulfate. This chain is Sulfite reductase [NADPH] hemoprotein beta-component (cysI), found in Bacillus subtilis (strain 168).